Consider the following 107-residue polypeptide: Phosphoribosyl-ATP pyrophosphatase (107 aa).

This sequence belongs to the PRA-PH family.

It localises to the cytoplasm. The enzyme catalyses 1-(5-phospho-beta-D-ribosyl)-ATP + H2O = 1-(5-phospho-beta-D-ribosyl)-5'-AMP + diphosphate + H(+). It participates in amino-acid biosynthesis; L-histidine biosynthesis; L-histidine from 5-phospho-alpha-D-ribose 1-diphosphate: step 2/9. The chain is Phosphoribosyl-ATP pyrophosphatase from Rhizobium etli (strain CIAT 652).